A 430-amino-acid polypeptide reads, in one-letter code: Crotonyl-CoA carboxylase/reductase (430 aa).

It belongs to the zinc-containing alcohol dehydrogenase family. Crotonyl-CoA carboxylase/reductase subfamily. Homodimer. Requires Despite some sequence similarity to zinc-containing alcohol dehydrogenases, this enzyme does not bind any metals. as cofactor.

It carries out the reaction (2S)-ethylmalonyl-CoA + NADP(+) = (2E)-butenoyl-CoA + CO2 + NADPH. The enzyme catalyses (S)-methylmalonyl-CoA + NADP(+) = acryloyl-CoA + CO2 + NADPH. The catalysed reaction is butanoyl-CoA + NADP(+) = (2E)-butenoyl-CoA + NADPH + H(+). Its function is as follows. Catalyzes the NADPH-dependent reductive carboxylation of crotonyl-CoA ((2E)-butenoyl-CoA) to (2S)-ethylmalonyl-CoA, in the presence of CO2. This is a key reaction in the ethylmalonyl-CoA pathway for acetyl-CoA assimilation required for R.sphaeroides growth on acetate as sole carbon source. Is also able to accept acryloyl-CoA as an alternative substrate, yielding (2S)-methylmalonyl-CoA. To a lesser extent, when CO2 is absent, the enzyme also catalyzes the reduction of crotonyl-CoA to butanoyl-CoA. In Cereibacter sphaeroides (strain ATCC 17023 / DSM 158 / JCM 6121 / CCUG 31486 / LMG 2827 / NBRC 12203 / NCIMB 8253 / ATH 2.4.1.) (Rhodobacter sphaeroides), this protein is Crotonyl-CoA carboxylase/reductase.